The sequence spans 88 residues: UPF0298 protein Bcer98_2635 (88 aa).

It belongs to the UPF0298 family.

It localises to the cytoplasm. This chain is UPF0298 protein Bcer98_2635, found in Bacillus cytotoxicus (strain DSM 22905 / CIP 110041 / 391-98 / NVH 391-98).